The chain runs to 95 residues: Small ribosomal subunit protein uS17 (95 aa).

The protein belongs to the universal ribosomal protein uS17 family. As to quaternary structure, part of the 30S ribosomal subunit.

Functionally, one of the primary rRNA binding proteins, it binds specifically to the 5'-end of 16S ribosomal RNA. The chain is Small ribosomal subunit protein uS17 from Mesomycoplasma hyopneumoniae (strain 7448) (Mycoplasma hyopneumoniae).